A 338-amino-acid polypeptide reads, in one-letter code: Ketol-acid reductoisomerase (NADP(+)) (338 aa).

A KARI N-terminal Rossmann domain is found at 1–181 (MKVYYDKDCN…GGGRSGIIET (181 aa)). NADP(+) contacts are provided by residues 24 to 27 (YGSQ), R47, S50, S52, and 82 to 85 (DETQ). Residue H107 is part of the active site. Residue G133 coordinates NADP(+). The 146-residue stretch at 182-327 (NFREETETDL…ARLRAMMPWI (146 aa)) folds into the KARI C-terminal knotted domain. Mg(2+) is bound by residues D190, E194, E226, and E230. S251 is a substrate binding site.

Belongs to the ketol-acid reductoisomerase family. Mg(2+) serves as cofactor.

The catalysed reaction is (2R)-2,3-dihydroxy-3-methylbutanoate + NADP(+) = (2S)-2-acetolactate + NADPH + H(+). It catalyses the reaction (2R,3R)-2,3-dihydroxy-3-methylpentanoate + NADP(+) = (S)-2-ethyl-2-hydroxy-3-oxobutanoate + NADPH + H(+). The protein operates within amino-acid biosynthesis; L-isoleucine biosynthesis; L-isoleucine from 2-oxobutanoate: step 2/4. It participates in amino-acid biosynthesis; L-valine biosynthesis; L-valine from pyruvate: step 2/4. Involved in the biosynthesis of branched-chain amino acids (BCAA). Catalyzes an alkyl-migration followed by a ketol-acid reduction of (S)-2-acetolactate (S2AL) to yield (R)-2,3-dihydroxy-isovalerate. In the isomerase reaction, S2AL is rearranged via a Mg-dependent methyl migration to produce 3-hydroxy-3-methyl-2-ketobutyrate (HMKB). In the reductase reaction, this 2-ketoacid undergoes a metal-dependent reduction by NADPH to yield (R)-2,3-dihydroxy-isovalerate. In Pelobacter propionicus (strain DSM 2379 / NBRC 103807 / OttBd1), this protein is Ketol-acid reductoisomerase (NADP(+)).